Here is a 75-residue protein sequence, read N- to C-terminus: Phytosulfokines (75 aa).

Positions 1 to 22 (MSSKAITLLLIALLFSLSLAQA) are cleaved as a signal peptide. A propeptide spanning residues 23 to 66 (ARPLQPADSTKSVHVIPEKVHDEACEGVGEEECLMRRTLTAHVD) is cleaved from the precursor. Sulfotyrosine is present on residues Tyr-67 and Tyr-69. Positions 72–75 (DHNP) are excised as a propeptide.

Belongs to the phytosulfokine family. Post-translationally, sulfation is important for activity and for the binding to a putative membrane receptor. Deletion of the sulfate groups of Tyr-67 and Tyr-69 resulted in compounds with respectively 0.6% and 4% of the activity. PSK-alpha is produced by endopeptidase digestion. PSK-beta is produced from PSK-alpha by exopeptidase digestion.

It is found in the secreted. Its function is as follows. Promotes plant cell differentiation, organogenesis and somatic embryogenesis as well as cell proliferation. This chain is Phytosulfokines (PSK), found in Asparagus officinalis (Garden asparagus).